The following is a 1234-amino-acid chain: MKEEVKGIPVRVALRCRPLVPKEISEGCQMCLSFVPGETQVVVGTDKSFTYDFVFDPCTEQEEVFNKAVAPLIKGIFKGYNATVLAYGQTGSGKTYSMGGAYTAEQENEPTVGIIPRVIQLLFKEIDKKSDFEFTLKVSYLEIYNEEILDLLCPSREKAQINIREDPKEGIKIVGLTEKTVLVALDTVSCLEQGNNSRTVASTAMNSQSSRSHAIFTISIEQRKKSDKNCSFRSKLHLVDLAGSERQKKTKAEGDRLKEGININRGLLCLGNVISALGDDKKGSFVPYRDSKLTRLLQDSLGGNSHTLMIACVSPADSNLEETLSTLRYADRARKIKNKPIVNIDPHTAELNHLKQQVQQLQVLLLQAHGGTLPGSINAEPSENLQSLMEKNQSLVEENEKLSRCLSKAAGQTAQMLERIILTEQVNEKLNAKLEELRQHVACKLDLQKLVETLEDQELKENVEIICNLQQLITQLSDETVACTAAAIDTAVEEEAQVETSPETSRSSDAFTTQHALHQAQMSKEVVELNNALALKEALVRKMTQNDNQLQPIQFQYQDNIKNLELEVINLQKEKEELVRELQTAKKNVNQAKLSEHRHKLLQELEGQIADLKKKLNEQSKLLKLKESTERTVSKLNQEIWMMKNQRVQLMRQMKEDAEKFRQWKQKKDKEVIQLKERDRKRQYELLKLERNFQKQSSVLRRKTEEAAAANKRLKDALQKQREVTDKRKETQSHGKEGIAARVRNWLGNEIEVMVSTEEAKRHLNDLLEDRKILAQDVVQLKEKKESRENPPPKLRKCTFSLSEVHGQVLESEDCITKQIESLETEMELRSAQIADLQQKLLDAESEDRPKQCWENIATILEAKCALKYLIGELVSSKIHVTKLENSLRQSKASCADMQKMLFEEQNHFSEIETELQAELVRMEQQHQEKVLYLVSQLQESQMAEKQLEKSASEKEQQLVSTLQCQDEELEKMREVCEQNQQLLQENEIIKQKLILLQVASRQKHLPNDTLLSPDSSFEYIPPKPKPSRVKEKFLEQSMDIEDLKYCSEHSVNEHEDGDGDGDSDEGDDEEWKPTKLVKVSRKNIQGCSCKGWCGNKQCGCRKQKSDCGVDCSCDPTKCRNRQQGKDSLGTVEQTQDSEGSFKLEDPTEVTPGLSFFNPVCATPNSKILKEMCDMEQVLSKKTAPAPSPFDLPESKHGATEYQQNKPPGKKKKRALASNTSFFSGCSPIEEEAH.

The Kinesin motor domain occupies 9 to 336 (PVRVALRCRP…LRYADRARKI (328 aa)). 88-95 (GQTGSGKT) lines the ATP pocket. Residues 350–999 (ELNHLKQQVQ…IKQKLILLQV (650 aa)) are a coiled coil. A Phosphoserine modification is found at S394. 2 disordered regions span residues 494–513 (EEAQ…AFTT) and 712–737 (KRLK…HGKE). Polar residues predominate over residues 498–513 (VETSPETSRSSDAFTT). The tract at residues 663-1234 (QWKQKKDKEV…GCSPIEEEAH (572 aa)) is interaction with PRC1. Residues 713 to 737 (RLKDALQKQREVTDKRKETQSHGKE) show a composition bias toward basic and acidic residues. A Nuclear localization signal motif is present at residues 793–798 (PKLRKC). Phosphothreonine is present on T799. 6 positions are modified to phosphoserine: S801, S951, S1001, S1013, S1017, and S1028. A globular region spans residues 1000 to 1234 (ASRQKHLPND…GCSPIEEEAH (235 aa)). Disordered regions lie at residues 1007-1030 (PNDT…PSRV), 1052-1076 (VNEH…KPTK), 1122-1143 (RQQG…GSFK), and 1183-1234 (TAPA…EEAH). A compositionally biased stretch (acidic residues) spans 1056-1071 (EDGDGDGDSDEGDDEE). The interval 1086-1144 (QGCSCKGWCGNKQCGCRKQKSDCGVDCSCDPTKCRNRQQGKDSLGTVEQTQDSEGSFKL) is CRD; required for [4Fe-4S] cluster binding and localization to the spindle midzone and midbody during anaphase and telophase. S1128 carries the post-translational modification Phosphoserine. T1183 bears the Phosphothreonine mark. Residue S1188 is modified to Phosphoserine. Residue K1196 forms a Glycyl lysine isopeptide (Lys-Gly) (interchain with G-Cter in SUMO2) linkage. S1227 is subject to Phosphoserine.

This sequence belongs to the TRAFAC class myosin-kinesin ATPase superfamily. Kinesin family. Chromokinesin subfamily. It depends on [2Fe-2S] cluster as a cofactor. Requires [4Fe-4S] cluster as cofactor. In terms of tissue distribution, specifically expressed in testis.

Its subcellular location is the nucleus matrix. The protein localises to the cytoplasm. It localises to the cytoskeleton. Its function is as follows. Iron-sulfur (Fe-S) cluster binding motor protein that has a role in chromosome segregation during mitosis. Translocates PRC1 to the plus ends of interdigitating spindle microtubules during the metaphase to anaphase transition, an essential step for the formation of an organized central spindle midzone and midbody and for successful cytokinesis. May play a role in mitotic chromosomal positioning and bipolar spindle stabilization. This chain is Chromosome-associated kinesin KIF4B (KIF4B), found in Homo sapiens (Human).